Reading from the N-terminus, the 416-residue chain is Pectin acetylesterase 10 (416 aa).

An N-terminal signal peptide occupies residues methionine 1–alanine 20. The N-linked (GlcNAc...) asparagine glycan is linked to asparagine 27. Residues serine 198, aspartate 294, and histidine 361 each act as charge relay system in the active site.

Belongs to the pectinacetylesterase family.

The protein localises to the secreted. Its subcellular location is the cell wall. Hydrolyzes acetyl esters in homogalacturonan regions of pectin. In type I primary cell wall, galacturonic acid residues of pectin can be acetylated at the O-2 and O-3 positions. Decreasing the degree of acetylation of pectin gels in vitro alters their physical properties. This Arabidopsis thaliana (Mouse-ear cress) protein is Pectin acetylesterase 10.